A 667-amino-acid chain; its full sequence is tRNA 5-methylaminomethyl-2-thiouridine biosynthesis bifunctional protein MnmC (667 aa).

Residues 1–241 (MHKLTFAQLS…KREMLCGEKA (241 aa)) form a tRNA (mnm(5)s(2)U34)-methyltransferase region. Residues 268-667 (VGGGIASLFV…RKWLKGSKVV (400 aa)) are FAD-dependent cmnm(5)s(2)U34 oxidoreductase.

In the N-terminal section; belongs to the methyltransferase superfamily. tRNA (mnm(5)s(2)U34)-methyltransferase family. The protein in the C-terminal section; belongs to the DAO family. Requires FAD as cofactor.

It is found in the cytoplasm. The enzyme catalyses 5-aminomethyl-2-thiouridine(34) in tRNA + S-adenosyl-L-methionine = 5-methylaminomethyl-2-thiouridine(34) in tRNA + S-adenosyl-L-homocysteine + H(+). Its function is as follows. Catalyzes the last two steps in the biosynthesis of 5-methylaminomethyl-2-thiouridine (mnm(5)s(2)U) at the wobble position (U34) in tRNA. Catalyzes the FAD-dependent demodification of cmnm(5)s(2)U34 to nm(5)s(2)U34, followed by the transfer of a methyl group from S-adenosyl-L-methionine to nm(5)s(2)U34, to form mnm(5)s(2)U34. The polypeptide is tRNA 5-methylaminomethyl-2-thiouridine biosynthesis bifunctional protein MnmC (Haemophilus ducreyi (strain 35000HP / ATCC 700724)).